The primary structure comprises 609 residues: Dihydroxy-acid dehydratase (609 aa).

Residue Asp-81 coordinates Mg(2+). Position 122 (Cys-122) interacts with [2Fe-2S] cluster. Asp-123 and Lys-124 together coordinate Mg(2+). Lys-124 carries the N6-carboxylysine modification. Residue Cys-195 participates in [2Fe-2S] cluster binding. Position 491 (Glu-491) interacts with Mg(2+). The active-site Proton acceptor is the Ser-517.

Belongs to the IlvD/Edd family. As to quaternary structure, homodimer. Requires [2Fe-2S] cluster as cofactor. Mg(2+) serves as cofactor.

It carries out the reaction (2R)-2,3-dihydroxy-3-methylbutanoate = 3-methyl-2-oxobutanoate + H2O. It catalyses the reaction (2R,3R)-2,3-dihydroxy-3-methylpentanoate = (S)-3-methyl-2-oxopentanoate + H2O. Its pathway is amino-acid biosynthesis; L-isoleucine biosynthesis; L-isoleucine from 2-oxobutanoate: step 3/4. It participates in amino-acid biosynthesis; L-valine biosynthesis; L-valine from pyruvate: step 3/4. Its function is as follows. Functions in the biosynthesis of branched-chain amino acids. Catalyzes the dehydration of (2R,3R)-2,3-dihydroxy-3-methylpentanoate (2,3-dihydroxy-3-methylvalerate) into 2-oxo-3-methylpentanoate (2-oxo-3-methylvalerate) and of (2R)-2,3-dihydroxy-3-methylbutanoate (2,3-dihydroxyisovalerate) into 2-oxo-3-methylbutanoate (2-oxoisovalerate), the penultimate precursor to L-isoleucine and L-valine, respectively. The protein is Dihydroxy-acid dehydratase of Acinetobacter baumannii (strain ACICU).